A 261-amino-acid chain; its full sequence is Cytochrome c oxidase subunit 3 (261 aa).

The Mitochondrial matrix segment spans residues 1–15; sequence MTHQTHAYHMVNPSP. The helical transmembrane segment at 16-34 threads the bilayer; it reads WPLTGALSALLMTSGLAMW. Residues 35 to 40 are Mitochondrial intermembrane-facing; that stretch reads FHYNLT. The chain crosses the membrane as a helical span at residues 41-66; the sequence is LLLTLGMTTNLLTMYQWWRDIIREST. At 67–72 the chain is on the mitochondrial matrix side; that stretch reads FQGHHT. Residues 73–105 traverse the membrane as a helical segment; the sequence is PIVQKGLRYGMILFIISEVFFFAGFFWAFYHSS. At 106 to 128 the chain is on the mitochondrial intermembrane side; sequence LAPTPELGGCWPPTGIIPLNPLE. A helical membrane pass occupies residues 129–152; the sequence is VPLLNTSVLLASGVSITWAHHSLM. The Mitochondrial matrix portion of the chain corresponds to 153–155; the sequence is EGN. The chain crosses the membrane as a helical span at residues 156 to 183; it reads RKHMLQALFITISLGVYFTLLQASEYYE. Over 184-190 the chain is Mitochondrial intermembrane; the sequence is TSFTISD. A helical membrane pass occupies residues 191–223; it reads GVYGSTFFMATGFHGLHVIIGSTFLIVCFLRQL. Residues 224–232 lie on the Mitochondrial matrix side of the membrane; that stretch reads KYHFTSNHH. Residues 233–256 form a helical membrane-spanning segment; that stretch reads FGFEAAAWYWHFVDVVWLFLYVSI. Over 257–261 the chain is Mitochondrial intermembrane; that stretch reads YWWGS.

The protein belongs to the cytochrome c oxidase subunit 3 family. As to quaternary structure, component of the cytochrome c oxidase (complex IV, CIV), a multisubunit enzyme composed of 14 subunits. The complex is composed of a catalytic core of 3 subunits MT-CO1, MT-CO2 and MT-CO3, encoded in the mitochondrial DNA, and 11 supernumerary subunits COX4I, COX5A, COX5B, COX6A, COX6B, COX6C, COX7A, COX7B, COX7C, COX8 and NDUFA4, which are encoded in the nuclear genome. The complex exists as a monomer or a dimer and forms supercomplexes (SCs) in the inner mitochondrial membrane with NADH-ubiquinone oxidoreductase (complex I, CI) and ubiquinol-cytochrome c oxidoreductase (cytochrome b-c1 complex, complex III, CIII), resulting in different assemblies (supercomplex SCI(1)III(2)IV(1) and megacomplex MCI(2)III(2)IV(2)).

The protein localises to the mitochondrion inner membrane. It catalyses the reaction 4 Fe(II)-[cytochrome c] + O2 + 8 H(+)(in) = 4 Fe(III)-[cytochrome c] + 2 H2O + 4 H(+)(out). Component of the cytochrome c oxidase, the last enzyme in the mitochondrial electron transport chain which drives oxidative phosphorylation. The respiratory chain contains 3 multisubunit complexes succinate dehydrogenase (complex II, CII), ubiquinol-cytochrome c oxidoreductase (cytochrome b-c1 complex, complex III, CIII) and cytochrome c oxidase (complex IV, CIV), that cooperate to transfer electrons derived from NADH and succinate to molecular oxygen, creating an electrochemical gradient over the inner membrane that drives transmembrane transport and the ATP synthase. Cytochrome c oxidase is the component of the respiratory chain that catalyzes the reduction of oxygen to water. Electrons originating from reduced cytochrome c in the intermembrane space (IMS) are transferred via the dinuclear copper A center (CU(A)) of subunit 2 and heme A of subunit 1 to the active site in subunit 1, a binuclear center (BNC) formed by heme A3 and copper B (CU(B)). The BNC reduces molecular oxygen to 2 water molecules using 4 electrons from cytochrome c in the IMS and 4 protons from the mitochondrial matrix. This is Cytochrome c oxidase subunit 3 (MT-CO3) from Felis catus (Cat).